The chain runs to 242 residues: N-glycosylase/DNA lyase (242 aa).

3 residues coordinate 8-oxoguanine: Gln25, Ser52, and Trp63. A helix-hairpin-helix region spans residues 119–183 (KSYYRDMNRL…VDARIERITR (65 aa)). Lys143 serves as the catalytic Schiff-base intermediate with DNA. Positions 147 and 173 each coordinate 8-oxoguanine. Asp175 is a catalytic residue. 8-oxoguanine contacts are provided by Asp209 and Trp213.

The protein belongs to the archaeal N-glycosylase/DNA lyase (AGOG) family.

The enzyme catalyses 2'-deoxyribonucleotide-(2'-deoxyribose 5'-phosphate)-2'-deoxyribonucleotide-DNA = a 3'-end 2'-deoxyribonucleotide-(2,3-dehydro-2,3-deoxyribose 5'-phosphate)-DNA + a 5'-end 5'-phospho-2'-deoxyribonucleoside-DNA + H(+). Functionally, DNA repair enzyme that is part of the base excision repair (BER) pathway; protects from oxidative damage by removing the major product of DNA oxidation, 8-oxoguanine (GO), from single- and double-stranded DNA substrates. The polypeptide is N-glycosylase/DNA lyase (Methanopyrus kandleri (strain AV19 / DSM 6324 / JCM 9639 / NBRC 100938)).